We begin with the raw amino-acid sequence, 288 residues long: Pyridoxal kinase PdxY (288 aa).

Substrate is bound by residues S12 and 47–48 (TQ). Residues D114, E151, K184, and 211–214 (RPLL) contribute to the ATP site. D225 is a binding site for substrate.

Belongs to the pyridoxine kinase family. PdxY subfamily. In terms of assembly, homodimer. Mg(2+) serves as cofactor.

It catalyses the reaction pyridoxal + ATP = pyridoxal 5'-phosphate + ADP + H(+). It functions in the pathway cofactor metabolism; pyridoxal 5'-phosphate salvage; pyridoxal 5'-phosphate from pyridoxal: step 1/1. Its function is as follows. Pyridoxal kinase involved in the salvage pathway of pyridoxal 5'-phosphate (PLP). Catalyzes the phosphorylation of pyridoxal to PLP. This is Pyridoxal kinase PdxY from Pseudomonas savastanoi pv. phaseolicola (strain 1448A / Race 6) (Pseudomonas syringae pv. phaseolicola (strain 1448A / Race 6)).